Here is an 874-residue protein sequence, read N- to C-terminus: Mitochondrial escape protein 2 (874 aa).

The N-terminal 55 residues, 1 to 55 (MIRTFATIANRGPGIRLATLAASRNLGYSSGGRISSVRIEKLRFSPFRSSTSLRY), are a transit peptide targeting the mitochondrion. The Mitochondrial matrix segment spans residues 56–313 (TSDIQHVMQE…ITDFIGNHQR (258 aa)). In terms of domain architecture, RRM spans 224 to 297 (VKLSVKFEGE…NTVVHIQYLP (74 aa)). Residues 314–334 (IAIPIILALLATAAVFIFDPI) traverse the membrane as a helical segment. Over 335–874 (REWFIMQNVS…GLSSKKSSWF (540 aa)) the chain is Mitochondrial intermembrane. The interval 547 to 566 (RRRQQGDSTSEDILSEDEYL) is disordered. The span at 555 to 565 (TSEDILSEDEY) shows a compositional bias: acidic residues.

This sequence belongs to the YME2 family.

The protein resides in the mitochondrion inner membrane. Functionally, plays a role in maintaining the mitochondrial genome and in controlling the mtDNA escape. Involved in the regulation of mtDNA nucleotide structure and number. May have a dispensable role in early maturation of pre-rRNA. The sequence is that of Mitochondrial escape protein 2 (YME2) from Meyerozyma guilliermondii (strain ATCC 6260 / CBS 566 / DSM 6381 / JCM 1539 / NBRC 10279 / NRRL Y-324) (Yeast).